Reading from the N-terminus, the 468-residue chain is 3-isopropylmalate dehydratase large subunit (468 aa).

[4Fe-4S] cluster contacts are provided by C346, C406, and C409.

Belongs to the aconitase/IPM isomerase family. LeuC type 1 subfamily. In terms of assembly, heterodimer of LeuC and LeuD. The cofactor is [4Fe-4S] cluster.

It carries out the reaction (2R,3S)-3-isopropylmalate = (2S)-2-isopropylmalate. The protein operates within amino-acid biosynthesis; L-leucine biosynthesis; L-leucine from 3-methyl-2-oxobutanoate: step 2/4. Functionally, catalyzes the isomerization between 2-isopropylmalate and 3-isopropylmalate, via the formation of 2-isopropylmaleate. The protein is 3-isopropylmalate dehydratase large subunit of Pseudoalteromonas atlantica (strain T6c / ATCC BAA-1087).